Consider the following 406-residue polypeptide: Aminomethyltransferase, mitochondrial (406 aa).

Residues 1-29 (MRGGLWQLGQSITRRLAQADKKTIGRRCF) constitute a mitochondrion transit peptide. Residues E234, R265, and Y403 each contribute to the substrate site.

The protein belongs to the GcvT family. In terms of assembly, the glycine cleavage system is composed of four proteins: P, T, L and H.

Its subcellular location is the mitochondrion. It carries out the reaction N(6)-[(R)-S(8)-aminomethyldihydrolipoyl]-L-lysyl-[protein] + (6S)-5,6,7,8-tetrahydrofolate = N(6)-[(R)-dihydrolipoyl]-L-lysyl-[protein] + (6R)-5,10-methylene-5,6,7,8-tetrahydrofolate + NH4(+). Its function is as follows. The glycine cleavage system catalyzes the degradation of glycine. The protein is Aminomethyltransferase, mitochondrial (GDCST) of Solanum tuberosum (Potato).